The chain runs to 475 residues: Sensor histidine kinase GlrK (475 aa).

The Cytoplasmic portion of the chain corresponds to 1–13; sequence MKRWPVFPRSLRQ. The chain crosses the membrane as a helical span at residues 14–34; that stretch reads LVMLAFLLILLPLLVLAWQAW. Residues 35–173 are Periplasmic-facing; sequence QSLNALSDQA…LQREIAERGQ (139 aa). Residues 174-194 form a helical membrane-spanning segment; the sequence is YFGWQSLVLFLVSLVMVLLFT. Topologically, residues 195–475 are cytoplasmic; sequence RMIIGPVKNI…IELPSSKNTK (281 aa). A Histidine kinase domain is found at 256–472; the sequence is HLSHELKTPL…CFRIELPSSK (217 aa). Histidine 259 is modified (phosphohistidine; by autocatalysis).

Autophosphorylated.

The protein resides in the cell inner membrane. The enzyme catalyses ATP + protein L-histidine = ADP + protein N-phospho-L-histidine.. In terms of biological role, member of the two-component regulatory system GlrR/GlrK that up-regulates transcription of the glmY sRNA when cells enter the stationary growth phase. Activates GlrR by phosphorylation. The chain is Sensor histidine kinase GlrK (glrK) from Escherichia coli (strain K12).